The sequence spans 340 residues: Sodium/bile acid cotransporter 7 (340 aa).

Over 1–10 (MRLLERARKE) the chain is Cytoplasmic. A helical transmembrane segment spans residues 11–31 (WFMVGIVVAIGAAKLEPSVGV). Over 32–37 (NGGPLK) the chain is Extracellular. The helical transmembrane segment at 38–58 (PEITVSYIAVATIFFNSGLSL) threads the bilayer. Over 59–71 (KTEELTSALVHLR) the chain is Cytoplasmic. Residues 72 to 92 (LHLFIQIFTLAFFPAAIWLFL) form a helical membrane-spanning segment. Over 93–116 (QLLSVTSINEWLLKGLQTVGCMPP) the chain is Extracellular. Residues 117-137 (PVSSAVILTKAVGGNEAAAIF) form a helical membrane-spanning segment. Asn-138 is a topological domain (cytoplasmic). A helical transmembrane segment spans residues 139-159 (SAFGSFLGIVVTPVLLLLFLG). The Extracellular segment spans residues 160-163 (SSSS). Residues 164–184 (VPFTSIFSQLFMTVVVPLVIG) form a helical membrane-spanning segment. Residues 185–201 (QIVRRYIKDWLERKKPP) are Cytoplasmic-facing. The chain crosses the membrane as a helical span at residues 202–222 (FGVVSSSVLLMIIYTTFCDTF). Residues 223–234 (SNPNIDLDKFSL) lie on the Extracellular side of the membrane. A helical membrane pass occupies residues 235–255 (ILILFIIVSVQLSFMLLTFIF). Topologically, residues 256 to 270 (STRNNSGFTPADTVA) are cytoplasmic. A helical transmembrane segment spans residues 271–291 (IIFCSTHKSLTLGIPMLKIVF). The Extracellular segment spans residues 292-298 (AGHEHLS). A helical membrane pass occupies residues 299–319 (LISVPLLIYHPAQILLGSVLV). At 320–340 (PTIKSWMVSRQKGVKLTRPTV) the chain is on the cytoplasmic side.

This sequence belongs to the bile acid:sodium symporter (BASS) (TC 2.A.28) family. Expressed in heart, brain, colon, lung, liver, adrenal gland, stomach and ovary. Also expressed weakly in small intestine. Expressed in skeletal tissues.

It is found in the cell membrane. It localises to the endoplasmic reticulum membrane. Its subcellular location is the golgi apparatus membrane. Its function is as follows. Involved in teeth and skeletal development. Has an essential role in the biosynthesis and trafficking of glycosaminoglycans and glycoproteins to produce a proper functioning extracellular matrix. Required for extracellular matrix mineralization. Also involved in the regulation of cellular calcium homeostasis. Does not show transport activity towards bile acids or steroid sulfates (including taurocholate, cholate, chenodeoxycholate, estrone-3-sulfate, dehydroepiandrosterone sulfate (DHEAS) and pregnenolone sulfate). This chain is Sodium/bile acid cotransporter 7 (Slc10a7), found in Mus musculus (Mouse).